The chain runs to 70 residues: ATP synthase subunit c (70 aa).

A run of 2 helical transmembrane segments spans residues 3–23 and 47–67; these read FIAA…GNGM and FIGV…AFML.

It belongs to the ATPase C chain family. F-type ATPases have 2 components, F(1) - the catalytic core - and F(0) - the membrane proton channel. F(1) has five subunits: alpha(3), beta(3), gamma(1), delta(1), epsilon(1). F(0) has three main subunits: a(1), b(2) and c(10-14). The alpha and beta chains form an alternating ring which encloses part of the gamma chain. F(1) is attached to F(0) by a central stalk formed by the gamma and epsilon chains, while a peripheral stalk is formed by the delta and b chains.

It is found in the cell membrane. In terms of biological role, f(1)F(0) ATP synthase produces ATP from ADP in the presence of a proton or sodium gradient. F-type ATPases consist of two structural domains, F(1) containing the extramembraneous catalytic core and F(0) containing the membrane proton channel, linked together by a central stalk and a peripheral stalk. During catalysis, ATP synthesis in the catalytic domain of F(1) is coupled via a rotary mechanism of the central stalk subunits to proton translocation. Key component of the F(0) channel; it plays a direct role in translocation across the membrane. A homomeric c-ring of between 10-14 subunits forms the central stalk rotor element with the F(1) delta and epsilon subunits. This chain is ATP synthase subunit c, found in Lacticaseibacillus casei (strain BL23) (Lactobacillus casei).